The primary structure comprises 332 residues: Fructose-1,6-bisphosphatase class 1 (332 aa).

Glutamate 89, aspartate 110, leucine 112, and aspartate 113 together coordinate Mg(2+). Substrate contacts are provided by residues 113–116 (DGSS), asparagine 206, tyrosine 239, 257–259 (YLY), and lysine 269. Residue glutamate 275 coordinates Mg(2+).

Belongs to the FBPase class 1 family. As to quaternary structure, homotetramer. It depends on Mg(2+) as a cofactor.

It localises to the cytoplasm. It carries out the reaction beta-D-fructose 1,6-bisphosphate + H2O = beta-D-fructose 6-phosphate + phosphate. It participates in carbohydrate biosynthesis; gluconeogenesis. The chain is Fructose-1,6-bisphosphatase class 1 from Salmonella typhimurium (strain LT2 / SGSC1412 / ATCC 700720).